The chain runs to 100 residues: Large ribosomal subunit protein uL23 (100 aa).

The protein belongs to the universal ribosomal protein uL23 family. In terms of assembly, part of the 50S ribosomal subunit. Contacts protein L29, and trigger factor when it is bound to the ribosome.

One of the early assembly proteins it binds 23S rRNA. One of the proteins that surrounds the polypeptide exit tunnel on the outside of the ribosome. Forms the main docking site for trigger factor binding to the ribosome. The sequence is that of Large ribosomal subunit protein uL23 from Pseudothermotoga lettingae (strain ATCC BAA-301 / DSM 14385 / NBRC 107922 / TMO) (Thermotoga lettingae).